Consider the following 564-residue polypeptide: Ribulokinase (564 aa).

This sequence belongs to the ribulokinase family.

It catalyses the reaction D-ribulose + ATP = D-ribulose 5-phosphate + ADP + H(+). The enzyme catalyses L-ribulose + ATP = L-ribulose 5-phosphate + ADP + H(+). Its pathway is carbohydrate degradation; L-arabinose degradation via L-ribulose; D-xylulose 5-phosphate from L-arabinose (bacterial route): step 2/3. The sequence is that of Ribulokinase from Geobacillus thermodenitrificans (strain NG80-2).